We begin with the raw amino-acid sequence, 460 residues long: Cysteine--tRNA ligase (460 aa).

C28 provides a ligand contact to Zn(2+). The 'HIGH' region signature appears at M30 to H40. Zn(2+)-binding residues include C209, H234, and E238. The 'KMSKS' region signature appears at K266 to S270. An ATP-binding site is contributed by K269.

It belongs to the class-I aminoacyl-tRNA synthetase family. As to quaternary structure, monomer. Requires Zn(2+) as cofactor.

The protein resides in the cytoplasm. It catalyses the reaction tRNA(Cys) + L-cysteine + ATP = L-cysteinyl-tRNA(Cys) + AMP + diphosphate. The polypeptide is Cysteine--tRNA ligase (Pseudomonas aeruginosa (strain UCBPP-PA14)).